The chain runs to 592 residues: Tegument protein US23 (592 aa).

A disordered region spans residues 407–491 (PRSLGDGEEE…NNVVPNVERR (85 aa)). Over residues 460–481 (ADDEEQGEDDDDSGAEPMEPEE) the composition is skewed to acidic residues.

Belongs to the herpesviridae US22 family.

It is found in the virion tegument. This is Tegument protein US23 (US23) from Homo sapiens (Human).